Reading from the N-terminus, the 196-residue chain is Chromophore lyase CpcT/CpeT (196 aa).

Belongs to the CpcT/CpeT biliprotein lyase family.

Covalently attaches a chromophore to Cys residue(s) of phycobiliproteins. The polypeptide is Chromophore lyase CpcT/CpeT (Synechocystis sp. (strain ATCC 27184 / PCC 6803 / Kazusa)).